A 118-amino-acid chain; its full sequence is uncharacterized protein (118 aa).

The HTH hxlR-type domain occupies 6–104 (CGFEVTKEVI…WGGYYAEQEY (99 aa)).

This is an uncharacterized protein from Bacillus subtilis (strain 168).